The following is a 325-amino-acid chain: ATP synthase gamma chain (325 aa).

This sequence belongs to the ATPase gamma chain family. As to quaternary structure, F-type ATPases have 2 components, CF(1) - the catalytic core - and CF(0) - the membrane proton channel. CF(1) has five subunits: alpha(3), beta(3), gamma(1), delta(1), epsilon(1). CF(0) has three main subunits: a, b and c.

The protein resides in the cell membrane. Its function is as follows. Produces ATP from ADP in the presence of a proton gradient across the membrane. The gamma chain is believed to be important in regulating ATPase activity and the flow of protons through the CF(0) complex. The chain is ATP synthase gamma chain from Corynebacterium urealyticum (strain ATCC 43042 / DSM 7109).